The primary structure comprises 209 residues: GTP cyclohydrolase 1 (209 aa).

Zn(2+) is bound by residues Cys100, His103, and Cys171.

The protein belongs to the GTP cyclohydrolase I family. As to quaternary structure, toroid-shaped homodecamer, composed of two pentamers of five dimers.

The catalysed reaction is GTP + H2O = 7,8-dihydroneopterin 3'-triphosphate + formate + H(+). It functions in the pathway cofactor biosynthesis; 7,8-dihydroneopterin triphosphate biosynthesis; 7,8-dihydroneopterin triphosphate from GTP: step 1/1. This Ralstonia nicotianae (strain ATCC BAA-1114 / GMI1000) (Ralstonia solanacearum) protein is GTP cyclohydrolase 1.